The following is a 76-amino-acid chain: Omega-agatoxin-Aa3b (76 aa).

6 disulfide bridges follow: cysteine 2/cysteine 19, cysteine 9/cysteine 25, cysteine 16/cysteine 52, cysteine 18/cysteine 40, cysteine 27/cysteine 38, and cysteine 59/cysteine 67.

This sequence belongs to the neurotoxin 04 (omega-agtx) family. 03 (type II/III omega-agtx) subfamily. As to expression, expressed by the venom gland.

Its subcellular location is the secreted. Omega-agatoxins are antagonists of voltage-gated calcium channels. This toxin blocks calcium channels in insect central neurons but not at peripheral neuromuscular junctions. In vertebrates, it is broadly active against all high-threshold Cav1/CACNA1 channels and Cav2.2/CACNA1B channels. The sequence is that of Omega-agatoxin-Aa3b from Agelenopsis aperta (North American funnel-web spider).